Consider the following 276-residue polypeptide: Probable endonuclease 4 (276 aa).

H67, H107, E142, D176, H179, H211, D224, H226, and E256 together coordinate Zn(2+).

Belongs to the AP endonuclease 2 family. Zn(2+) serves as cofactor.

The catalysed reaction is Endonucleolytic cleavage to 5'-phosphooligonucleotide end-products.. Functionally, endonuclease IV plays a role in DNA repair. It cleaves phosphodiester bonds at apurinic or apyrimidinic (AP) sites, generating a 3'-hydroxyl group and a 5'-terminal sugar phosphate. The sequence is that of Probable endonuclease 4 from Methanosphaera stadtmanae (strain ATCC 43021 / DSM 3091 / JCM 11832 / MCB-3).